The following is a 152-amino-acid chain: Large ribosomal subunit protein uL13 (152 aa).

The segment at 129–152 is disordered; it reads EHPHEAQSPEVLDVKSMNKKNTRS.

It belongs to the universal ribosomal protein uL13 family. As to quaternary structure, part of the 50S ribosomal subunit.

Its function is as follows. This protein is one of the early assembly proteins of the 50S ribosomal subunit, although it is not seen to bind rRNA by itself. It is important during the early stages of 50S assembly. This Ruegeria sp. (strain TM1040) (Silicibacter sp.) protein is Large ribosomal subunit protein uL13.